Here is a 137-residue protein sequence, read N- to C-terminus: NADH-quinone oxidoreductase subunit A 2 (137 aa).

3 helical membrane-spanning segments follow: residues 12 to 32 (WGFAAFLLGVVGLLAFMLGVS), 66 to 86 (FYLVAMLFVIFDVEALFLFAW), and 95 to 115 (WAGLIEATIFIAILLAGLVYL).

This sequence belongs to the complex I subunit 3 family. As to quaternary structure, NDH-1 is composed of 13 different subunits. Subunits NuoA, H, J, K, L, M, N constitute the membrane sector of the complex.

The protein resides in the cell inner membrane. It carries out the reaction a quinone + NADH + 5 H(+)(in) = a quinol + NAD(+) + 4 H(+)(out). Its function is as follows. NDH-1 shuttles electrons from NADH, via FMN and iron-sulfur (Fe-S) centers, to quinones in the respiratory chain. The immediate electron acceptor for the enzyme in this species is believed to be ubiquinone. Couples the redox reaction to proton translocation (for every two electrons transferred, four hydrogen ions are translocated across the cytoplasmic membrane), and thus conserves the redox energy in a proton gradient. The protein is NADH-quinone oxidoreductase subunit A 2 of Pseudomonas aeruginosa (strain ATCC 15692 / DSM 22644 / CIP 104116 / JCM 14847 / LMG 12228 / 1C / PRS 101 / PAO1).